The chain runs to 1230 residues: ABC transporter B family member 5 (1230 aa).

Transmembrane regions (helical) follow at residues 27–47 (VLLMIVGSIGAIANGVCSPLM), 78–98 (LVYLGLGALGAAFLQVACWMI), 154–174 (FIQLISTFVGGFVIAFLRGWL), 177–197 (LVMLTSIPLLAMSGAAIAIIV), 253–273 (GFVTGLGLGVMFLVFFSTYAL), and 286–306 (GYTGGAVINVMVTVVSSSIAL). The 289-residue stretch at 30-318 (MIVGSIGAIA…ASPCLTAFTA (289 aa)) folds into the ABC transmembrane type-1 1 domain. Positions 353–589 (IELRDVCFSY…HEGAYSQLLR (237 aa)) constitute an ABC transporter 1 domain. Position 388–395 (388–395 (GESGSGKS)) interacts with ATP. 3 N-linked (GlcNAc...) asparagine glycosylation sites follow: asparagine 540, asparagine 615, and asparagine 616. A disordered region spans residues 602 to 621 (ISDGSISSGSSRGNNSTRQD). The span at 603–617 (SDGSISSGSSRGNNS) shows a compositional bias: low complexity. Transmembrane regions (helical) follow at residues 662 to 682 (ILILGTLVGAVNGTIFPIFGI) and 707 to 727 (MIFVLLGVAAVIVYPTTNYLF). Residues 663-950 (LILGTLVGAV…ASSFAPDSSK (288 aa)) enclose the ABC transmembrane type-1 2 domain. An N-linked (GlcNAc...) asparagine glycan is attached at asparagine 759. The next 3 helical transmembrane spans lie at 798 to 818 (IIAFTASWEVAIIILVIIPFI), 889 to 909 (GVGFGISFFVLYSVYASCFYV), and 924 to 944 (VFQVFLALTLTAVGISQASSF). Residues 985 to 1223 (IELCHISFTY…EGGVYASLVQ (239 aa)) form the ABC transporter 2 domain. 1020–1027 (GESGSGKS) contributes to the ATP binding site. N-linked (GlcNAc...) asparagine glycosylation is found at asparagine 1074, asparagine 1174, and asparagine 1227.

It belongs to the ABC transporter superfamily. ABCB family. Multidrug resistance exporter (TC 3.A.1.201) subfamily.

It is found in the membrane. The polypeptide is ABC transporter B family member 5 (ABCB5) (Arabidopsis thaliana (Mouse-ear cress)).